We begin with the raw amino-acid sequence, 197 residues long: Peptidyl-tRNA hydrolase (197 aa).

Residue Y17 participates in tRNA binding. H22 serves as the catalytic Proton acceptor. TRNA is bound by residues F68, N70, and N116.

Belongs to the PTH family. Monomer.

It is found in the cytoplasm. The catalysed reaction is an N-acyl-L-alpha-aminoacyl-tRNA + H2O = an N-acyl-L-amino acid + a tRNA + H(+). In terms of biological role, hydrolyzes ribosome-free peptidyl-tRNAs (with 1 or more amino acids incorporated), which drop off the ribosome during protein synthesis, or as a result of ribosome stalling. Catalyzes the release of premature peptidyl moieties from peptidyl-tRNA molecules trapped in stalled 50S ribosomal subunits, and thus maintains levels of free tRNAs and 50S ribosomes. This is Peptidyl-tRNA hydrolase from Yersinia enterocolitica serotype O:8 / biotype 1B (strain NCTC 13174 / 8081).